The sequence spans 1149 residues: ATP-dependent helicase/deoxyribonuclease subunit B (1149 aa).

8-15 (GRAGSGKS) provides a ligand contact to ATP. [4Fe-4S] cluster contacts are provided by C788, C1106, C1109, and C1115.

Belongs to the helicase family. AddB/RexB type 1 subfamily. As to quaternary structure, heterodimer of AddA and AddB. Mg(2+) serves as cofactor. It depends on [4Fe-4S] cluster as a cofactor.

The heterodimer acts as both an ATP-dependent DNA helicase and an ATP-dependent, dual-direction single-stranded exonuclease. Recognizes the chi site generating a DNA molecule suitable for the initiation of homologous recombination. The AddB subunit has 5' -&gt; 3' nuclease activity but not helicase activity. The chain is ATP-dependent helicase/deoxyribonuclease subunit B from Ruminiclostridium cellulolyticum (strain ATCC 35319 / DSM 5812 / JCM 6584 / H10) (Clostridium cellulolyticum).